The primary structure comprises 229 residues: Flagellar L-ring protein (229 aa).

The first 25 residues, 1 to 25 (MKQVRLLPSAAVRAACALAAAALAG), serve as a signal peptide directing secretion. Cys26 carries the N-palmitoyl cysteine lipid modification. Cys26 carries S-diacylglycerol cysteine lipidation.

This sequence belongs to the FlgH family. In terms of assembly, the basal body constitutes a major portion of the flagellar organelle and consists of four rings (L,P,S, and M) mounted on a central rod.

The protein localises to the cell outer membrane. The protein resides in the bacterial flagellum basal body. In terms of biological role, assembles around the rod to form the L-ring and probably protects the motor/basal body from shearing forces during rotation. In Burkholderia multivorans (strain ATCC 17616 / 249), this protein is Flagellar L-ring protein.